The following is a 200-amino-acid chain: Molybdenum cofactor guanylyltransferase (200 aa).

Residues 10–12 (LAG), lysine 23, asparagine 51, aspartate 69, and aspartate 99 contribute to the GTP site. Aspartate 99 serves as a coordination point for Mg(2+).

It belongs to the MobA family. As to quaternary structure, monomer. Requires Mg(2+) as cofactor.

The protein resides in the cytoplasm. It carries out the reaction Mo-molybdopterin + GTP + H(+) = Mo-molybdopterin guanine dinucleotide + diphosphate. In terms of biological role, transfers a GMP moiety from GTP to Mo-molybdopterin (Mo-MPT) cofactor (Moco or molybdenum cofactor) to form Mo-molybdopterin guanine dinucleotide (Mo-MGD) cofactor. The polypeptide is Molybdenum cofactor guanylyltransferase (Shewanella halifaxensis (strain HAW-EB4)).